The primary structure comprises 323 residues: UDP-galactose/UDP-glucose transporter 7 (323 aa).

The Cytoplasmic segment spans residues 1 to 10 (MEVQAEMEPT). A helical transmembrane segment spans residues 11-31 (SSISLVAAVSYGIASMAMVFI). At 32 to 35 (NKAV) the chain is on the lumenal side. A helical transmembrane segment spans residues 36 to 58 (IMQYPHSMTVLTLQQLATSLLIH). Residues 59–78 (FGRRMGYTRAKGIDMATAKK) are Cytoplasmic-facing. The chain crosses the membrane as a helical span at residues 79-97 (LLPVSIFYNANVAFALASL). The Lumenal segment spans residues 98-101 (KGVN). Residues 102 to 124 (IPMYIAIKRLTPLAVLISGVLFG) form a helical membrane-spanning segment. The Cytoplasmic segment spans residues 125–132 (KGKPTTQV). Residues 133–153 (ALSVLLTAAGCVIAALGDFSF) traverse the membrane as a helical segment. Asp154 is a topological domain (lumenal). Residues 155–175 (LFGYGLALTSVFFQTMYLVLV) form a helical membrane-spanning segment. The Cytoplasmic segment spans residues 176–186 (EKSGAEDGLSS). The chain crosses the membrane as a helical span at residues 187 to 207 (IEIMFYNSFLSLPFLSILIIV). The Lumenal segment spans residues 208–226 (TGEFPNSLSLLLAKCSYLP). The helical transmembrane segment at 227–247 (FLVILILSLVMGIVLNFTMFL) threads the bilayer. Over 248–252 (CTIVN) the chain is Cytoplasmic. The chain crosses the membrane as a helical span at residues 253–275 (SALTTTIVGVLKGVGSTTLGFVL). Residues 276–278 (LGG) lie on the Lumenal side of the membrane. Residues 279–301 (VEVHALNVSGLVVNTAGGVWYSY) form a helical membrane-spanning segment. At 302–323 (AKYRQKKAKPAKLMSDLEAHKK) the chain is on the cytoplasmic side.

The protein belongs to the TPT transporter family. UGnT (TC 2.A.7.15) subfamily. In terms of tissue distribution, widely expressed with highest expression in roots.

The protein resides in the golgi apparatus membrane. In terms of biological role, nucleotide-sugar transporter that transports UDP-glucose and UDP-galactose. Plays a role in lateral root and root hair development. In Arabidopsis thaliana (Mouse-ear cress), this protein is UDP-galactose/UDP-glucose transporter 7.